Reading from the N-terminus, the 120-residue chain is ESAT-6-like protein EsxQ (120 aa).

Belongs to the WXG100 family. ESAT-6 subfamily.

It is found in the secreted. This is ESAT-6-like protein EsxQ from Mycobacterium bovis (strain ATCC BAA-935 / AF2122/97).